Consider the following 732-residue polypeptide: Nephrocystin-1 (732 aa).

Residues 3 to 105 (ARRQRDPLQA…LQGLAVTISR (103 aa)) adopt a coiled-coil conformation. At tyrosine 46 the chain carries Phosphotyrosine; by FAK2. Disordered stretches follow at residues 103–153 (ISRE…KWST) and 205–244 (TYLEPYSEEEEGQESSEEGSEEDVEAVDETADGAEVKQRT). Composition is skewed to acidic residues over residues 115–145 (TEEEEESESEDSEDSGGEEEDAEEEEEEKEE) and 210–236 (YSEEEEGQESSEEGSEEDVEAVDETAD). Phosphoserine; by CK2 is present on residues serine 121, serine 123, and serine 126. Positions 127 to 150 (EDSGGEEEDAEEEEEEKEENESHK) form a coiled coil. Positions 152–212 (STGEEYIAVG…PRTYLEPYSE (61 aa)) constitute an SH3 domain. The residue at position 349 (tyrosine 349) is a Phosphotyrosine; by FAK2. At tyrosine 721 the chain carries Phosphotyrosine; by SRC.

The protein belongs to the nephrocystin-1 family. Interacts with BCAR1, PTK2B/PYK2 and tensin. Interacts with INVS and NPHP3. Interacts with PACS1; the interaction is dependent on NPHP1 phosphorylation by CK2. Interacts with KIF7. Interacts with AHI1 and TNK2. Interacts with NPHP4 in a complex containing NPHP1, NPHP4 and RPGRIP1L. Interacts with IQCB1; the interaction likely requires additional interactors. Interacts with ANKS3. Interacts with SPATA7. Interacts with FLNA. In terms of processing, phosphorylation by CK2 is required for the interaction with PACS1 and the targeting to the base region of cilia. As to expression, widespread expression, with highest levels in pituitary gland, spinal cord, thyroid gland, testis, skeletal muscle, lymph node and trachea. Weakly expressed in heart, kidney and pancreas. Expressed in nasal epithelial cells (at protein level). Expressed in the renal collecting duct (at protein level).

The protein localises to the cell junction. It localises to the adherens junction. The protein resides in the cell projection. It is found in the cilium. Its subcellular location is the cytoplasm. The protein localises to the cytoskeleton. It localises to the cilium axoneme. The protein resides in the tight junction. In terms of biological role, together with BCAR1 it may play a role in the control of epithelial cell polarity. Involved in the organization of apical junctions in kidney cells together with NPHP4 and RPGRIP1L/NPHP8. Does not seem to be strictly required for ciliogenesis. Seems to help to recruit PTK2B/PYK2 to cell matrix adhesions, thereby initiating phosphorylation of PTK2B/PYK2 and PTK2B/PYK2-dependent signaling. May play a role in the regulation of intraflagellar transport (IFT) during cilia assembly. Required for normal retina development. In connecting photoreceptor cilia influences the movement of some IFT proteins such as IFT88 and WDR19. Involved in spermatogenesis. The chain is Nephrocystin-1 (NPHP1) from Homo sapiens (Human).